Consider the following 130-residue polypeptide: Transcription antitermination protein NusB (130 aa).

It belongs to the NusB family.

Functionally, involved in transcription antitermination. Required for transcription of ribosomal RNA (rRNA) genes. Binds specifically to the boxA antiterminator sequence of the ribosomal RNA (rrn) operons. This is Transcription antitermination protein NusB from Bacillus anthracis (strain A0248).